We begin with the raw amino-acid sequence, 633 residues long: DNA mismatch repair protein MutL (633 aa).

Belongs to the DNA mismatch repair MutL/HexB family.

This protein is involved in the repair of mismatches in DNA. It is required for dam-dependent methyl-directed DNA mismatch repair. May act as a 'molecular matchmaker', a protein that promotes the formation of a stable complex between two or more DNA-binding proteins in an ATP-dependent manner without itself being part of a final effector complex. This Bacillus pumilus (strain SAFR-032) protein is DNA mismatch repair protein MutL.